A 71-amino-acid polypeptide reads, in one-letter code: MSYFRRRLSPIKPSDPIDYKDVDLLRKFITERGKILPRRITGLTARQQRDLAVAIKRARILALLPFLNQEG.

The protein belongs to the bacterial ribosomal protein bS18 family. Part of the 30S ribosomal subunit. Forms a tight heterodimer with protein bS6.

In terms of biological role, binds as a heterodimer with protein bS6 to the central domain of the 16S rRNA, where it helps stabilize the platform of the 30S subunit. In Synechococcus elongatus (strain ATCC 33912 / PCC 7942 / FACHB-805) (Anacystis nidulans R2), this protein is Small ribosomal subunit protein bS18.